The sequence spans 226 residues: uncharacterized protein (226 aa).

In terms of domain architecture, HTH arsR-type spans 1-92 (MNPNIAKISS…QLLHIAPKAK (92 aa)). The H-T-H motif DNA-binding region spans 32 to 55 (AGELAYLANIKPQTASFHLNKLLE).

This is an uncharacterized protein from Bacillus subtilis (strain 168).